The following is a 208-amino-acid chain: NADH-ubiquinone oxidoreductase chain 4 (208 aa).

Helical transmembrane passes span 23–43 (VWIN…NLLW), 60–80 (PLSA…LLAS), 93–113 (KLYI…FSAN), 114–134 (ELIM…IIIT), 147–167 (IYFL…LIYI), and 185–205 (PINQ…AFMV).

This sequence belongs to the complex I subunit 4 family. As to quaternary structure, core subunit of respiratory chain NADH dehydrogenase (Complex I) which is composed of 45 different subunits.

The protein localises to the mitochondrion inner membrane. It catalyses the reaction a ubiquinone + NADH + 5 H(+)(in) = a ubiquinol + NAD(+) + 4 H(+)(out). Core subunit of the mitochondrial membrane respiratory chain NADH dehydrogenase (Complex I) which catalyzes electron transfer from NADH through the respiratory chain, using ubiquinone as an electron acceptor. Essential for the catalytic activity and assembly of complex I. In Microtus pennsylvanicus (Meadow vole), this protein is NADH-ubiquinone oxidoreductase chain 4 (MT-ND4).